The following is a 445-amino-acid chain: Ribosomal protein uS12 methylthiotransferase RimO (445 aa).

Positions 4 to 119 (YKVGMVSLGC…INEAIMNFIN (116 aa)) constitute an MTTase N-terminal domain. Residues Cys-13, Cys-48, Cys-82, Cys-157, Cys-161, and Cys-164 each coordinate [4Fe-4S] cluster. Residues 143–373 (TTDKATAYLR…MLLQKELSEE (231 aa)) enclose the Radical SAM core domain. Positions 376 to 441 (KNKLGREYDV…EYDLVGVVCN (66 aa)) constitute a TRAM domain.

It belongs to the methylthiotransferase family. RimO subfamily. The cofactor is [4Fe-4S] cluster.

The protein resides in the cytoplasm. The enzyme catalyses L-aspartate(89)-[ribosomal protein uS12]-hydrogen + (sulfur carrier)-SH + AH2 + 2 S-adenosyl-L-methionine = 3-methylsulfanyl-L-aspartate(89)-[ribosomal protein uS12]-hydrogen + (sulfur carrier)-H + 5'-deoxyadenosine + L-methionine + A + S-adenosyl-L-homocysteine + 2 H(+). Catalyzes the methylthiolation of an aspartic acid residue of ribosomal protein uS12. The protein is Ribosomal protein uS12 methylthiotransferase RimO of Clostridium perfringens (strain SM101 / Type A).